A 128-amino-acid chain; its full sequence is Hemoglobin subunit beta-1 (128 aa).

The 127-residue stretch at 2 to 128 (HWTAEEKALV…VVDALSKGYH (127 aa)) folds into the Globin domain. Residues histidine 51 and histidine 74 each coordinate heme b.

It belongs to the globin family. As to quaternary structure, hb 1 is a heterotetramer of two alpha and two beta-1 chains. As to expression, red blood cells (at protein level).

Its function is as follows. Involved in oxygen transport from gills to the various peripheral tissues. This Somniosus microcephalus (Greenland sleeper shark) protein is Hemoglobin subunit beta-1.